The sequence spans 165 residues: Endoribonuclease YbeY (165 aa).

Zn(2+)-binding residues include histidine 130, histidine 134, and histidine 140.

Belongs to the endoribonuclease YbeY family. Zn(2+) serves as cofactor.

Its subcellular location is the cytoplasm. Single strand-specific metallo-endoribonuclease involved in late-stage 70S ribosome quality control and in maturation of the 3' terminus of the 16S rRNA. This Streptococcus sanguinis (strain SK36) protein is Endoribonuclease YbeY.